The following is a 360-amino-acid chain: LETM1 domain-containing protein 1 (360 aa).

Positions Met1 to Met110 are required and sufficient for mitochondrial import. The Cytoplasmic segment spans residues Met1–Lys137. A helical transmembrane segment spans residues Cys138–Met158. Residues Tyr159–Arg360 lie on the Mitochondrial intermembrane side of the membrane. The region spanning Phe186–Arg360 is the Letm1 RBD domain.

In terms of assembly, interacts with BRI3BP. Interacts (via C-terminal) with SMARCA4; the interaction regulates transcriptional expression of thermogenic genes in brown adipose tissue. Kidney, liver, skeletal muscle, heart and brain. Overexpressed in various tumors including leukemia, lymphoma, and carcinomas of the breast, kidney, ovary, stomach, colon and uterine cervix.

Its subcellular location is the mitochondrion outer membrane. The protein localises to the nucleus. It is found in the mitochondrion inner membrane. Plays an essential role for mitochondrial structure and function, as well as thermogenesis of brown adipocytes. In brown adipose tissue also localizes in the nucleus where it interacts with the chromatin remodeler SMARCA4 to regulate thermogenic genes expression, such as UCP1. May regulate phagocytosis and inflammatory responses to lipopolysaccharide in macrophages. Involved in tumorigenesis and may function as a negative regulator of the p53/TP53. The sequence is that of LETM1 domain-containing protein 1 from Homo sapiens (Human).